The following is a 75-amino-acid chain: Metallothionein-like protein 1B (75 aa).

This sequence belongs to the metallothionein superfamily. Type 15 family.

In terms of biological role, metallothioneins have a high content of cysteine residues that bind various heavy metals. This Vicia faba (Broad bean) protein is Metallothionein-like protein 1B (MT1B).